We begin with the raw amino-acid sequence, 402 residues long: D-mannonate dehydratase (402 aa).

Substrate is bound by residues N37 and H122. The active-site Proton donor/acceptor is the Y159. D210 provides a ligand contact to Mg(2+). Catalysis depends on H212, which acts as the Proton donor/acceptor. E236 and E262 together coordinate Mg(2+). Substrate is bound by residues E262, R283, H312, D316, and E339.

It belongs to the mandelate racemase/muconate lactonizing enzyme family. GalD subfamily. Requires Mg(2+) as cofactor.

The catalysed reaction is D-mannonate = 2-dehydro-3-deoxy-D-gluconate + H2O. Its pathway is carbohydrate metabolism; pentose and glucuronate interconversion. Functionally, catalyzes the dehydration of D-mannonate. Has no detectable activity with a panel of 70 other acid sugars (in vitro). The chain is D-mannonate dehydratase from Rhizorhabdus wittichii (strain DSM 6014 / CCUG 31198 / JCM 15750 / NBRC 105917 / EY 4224 / RW1) (Sphingomonas wittichii).